The sequence spans 722 residues: Biotin--protein ligase (722 aa).

Positions 27–93 are disordered; it reads KELGKASDKQ…EPAADGDPGL (67 aa). A compositionally biased stretch (low complexity) spans 46–55; sequence ASPEAQPAQG. Phosphoserine is present on S295. Residues 459 to 648 enclose the BPL/LPL catalytic domain; the sequence is TRLGKVILFA…VLEKLIDRFQ (190 aa).

This sequence belongs to the biotin--protein ligase family. In terms of assembly, monomer.

It localises to the cytoplasm. It is found in the mitochondrion. The catalysed reaction is apo-[methylmalonyl-CoA:pyruvate carboxytransferase] + biotin + ATP = holo-[methylmalonyl-CoA:pyruvate carboxytransferase] + AMP + diphosphate + H(+). The enzyme catalyses apo-[propionyl-CoA:carbon-dioxide ligase (ADP-forming)] + biotin + ATP = holo-[propionyl-CoA:carbon-dioxide ligase (ADP-forming)] + AMP + diphosphate + H(+). It carries out the reaction apo-[3-methylcrotonoyl-CoA:carbon-dioxide ligase (ADP-forming)] + biotin + ATP = holo-[3-methylcrotonoyl-CoA:carbon-dioxide ligase (ADP-forming)] + AMP + diphosphate + H(+). It catalyses the reaction biotin + L-lysyl-[protein] + ATP = N(6)-biotinyl-L-lysyl-[protein] + AMP + diphosphate + H(+). Functionally, biotin--protein ligase catalyzing the biotinylation of the 4 biotin-dependent carboxylases acetyl-CoA-carboxylase, pyruvate carboxylase, propionyl-CoA carboxylase, and methylcrotonyl-CoA carboxylase. In Mus musculus (Mouse), this protein is Biotin--protein ligase.